Consider the following 184-residue polypeptide: Threonylcarbamoyl-AMP synthase (184 aa).

Positions methionine 1–glycine 184 constitute a YrdC-like domain.

Belongs to the SUA5 family. TsaC subfamily.

It is found in the cytoplasm. It catalyses the reaction L-threonine + hydrogencarbonate + ATP = L-threonylcarbamoyladenylate + diphosphate + H2O. Its function is as follows. Required for the formation of a threonylcarbamoyl group on adenosine at position 37 (t(6)A37) in tRNAs that read codons beginning with adenine. Catalyzes the conversion of L-threonine, HCO(3)(-)/CO(2) and ATP to give threonylcarbamoyl-AMP (TC-AMP) as the acyladenylate intermediate, with the release of diphosphate. In Actinobacillus pleuropneumoniae serotype 7 (strain AP76), this protein is Threonylcarbamoyl-AMP synthase.